Consider the following 120-residue polypeptide: Small ribosomal subunit protein bS16 (120 aa).

Residues 84–120 form a disordered region; sequence KRESRNNPQQGQPKKKAQERAAAAAAAAEKAASEAAA. A compositionally biased stretch (low complexity) spans 103-120; that stretch reads RAAAAAAAAEKAASEAAA.

This sequence belongs to the bacterial ribosomal protein bS16 family.

This chain is Small ribosomal subunit protein bS16, found in Beijerinckia indica subsp. indica (strain ATCC 9039 / DSM 1715 / NCIMB 8712).